A 171-amino-acid polypeptide reads, in one-letter code: Shikimate kinase (171 aa).

11 to 16 (ATGKTT) contributes to the ATP binding site. A Mg(2+)-binding site is contributed by Thr15. Asp33, Arg57, and Gly79 together coordinate substrate. Arg117 is an ATP binding site. Arg136 contributes to the substrate binding site.

This sequence belongs to the shikimate kinase family. Monomer. The cofactor is Mg(2+).

It localises to the cytoplasm. The catalysed reaction is shikimate + ATP = 3-phosphoshikimate + ADP + H(+). Its pathway is metabolic intermediate biosynthesis; chorismate biosynthesis; chorismate from D-erythrose 4-phosphate and phosphoenolpyruvate: step 5/7. In terms of biological role, catalyzes the specific phosphorylation of the 3-hydroxyl group of shikimic acid using ATP as a cosubstrate. The protein is Shikimate kinase of Thermoanaerobacter pseudethanolicus (strain ATCC 33223 / 39E) (Clostridium thermohydrosulfuricum).